The chain runs to 640 residues: Putative solute carrier organic anion transporter family member 1B7 (640 aa).

Residues 1 to 16 (MKISTTQIERRFEISS) are Extracellular-facing. A helical transmembrane segment spans residues 17 to 37 (SLVGLIDGSFEIGNLFVIVFV). Topologically, residues 38 to 49 (SYFGSKLHRPKL) are cytoplasmic. The chain crosses the membrane as a helical span at residues 50-70 (IGIGCFLMGTGSILMALPHFF). Residues 71-123 (MGYYRYSKETNIDPSENSTSNLPNCLINQMLSLNRTPSEIIERGCVKESGSHM) lie on the Extracellular side of the membrane. A helical transmembrane segment spans residues 124–144 (WIYVFMGNMLRGIGETPIVPL). Residues 145–159 (GISYIDDFAKEGHSS) lie on the Cytoplasmic side of the membrane. A helical membrane pass occupies residues 160-180 (LYLGTVNVMGMTGLVFAFMLG). Over 181-211 (SLFAKMYVDIGYVDLSTIRITPKDSRWVGAW) the chain is Extracellular. Residues 212-232 (WLGFLVSGIVSIISSIPFFFL) form a helical membrane-spanning segment. The Cytoplasmic segment spans residues 233 to 292 (PLNPNKPQKERKVSLFLHVLKTNDKRNQIANLTNRRKYITKNVTGFFQSLKSILTNPLYV). Ser246 carries the post-translational modification Phosphoserine. Residues 293 to 313 (IFVIFTLLHMSSYIASLTYII) traverse the membrane as a helical segment. The Extracellular portion of the chain corresponds to 314–329 (KMVEQQYGWSASKTNF). The helical transmembrane segment at 330–350 (LLGVLALPAVAIGMFSGGYII) threads the bilayer. Residues 351-362 (KKFKLSLVGLAK) are Cytoplasmic-facing. A helical membrane pass occupies residues 363–383 (LAFCSATVHLLSQVLYFFLIC). Residues 384–492 (ESKSVAGLTL…CTRKSYVYFV (109 aa)) are Extracellular-facing. The Kazal-like domain maps to 406 to 461 (DVPLSYCNSECNCDESQWEPVCGNNGITYLSPCLAGCKSSSGNKEPIVFYNCSCVE). 3 disulfide bridges follow: Cys412–Cys442, Cys418–Cys438, and Cys427–Cys459. The chain crosses the membrane as a helical span at residues 493 to 513 (IQVLDAFLCAVGLTSYSVLVI). The Cytoplasmic portion of the chain corresponds to 514-521 (RIVQPELK). Residues 522–542 (ALAIGFHSMIMRSLGGILVPI) form a helical membrane-spanning segment. Residues 543–577 (YFGALIDTTCMKWSTNSCGARGACRIYNSTYLGRA) are Extracellular-facing. A helical transmembrane segment spans residues 578-598 (FFGLKVALIFPVLVLLTVFIF). Over 599 to 640 (VVRKKSHGKDTKVLENERQVMDEANLEFLNDSEHFVPSAEEQ) the chain is Cytoplasmic. The residue at position 636 (Ser636) is a Phosphoserine.

This sequence belongs to the organo anion transporter (TC 2.A.60) family.

It localises to the cell membrane. The polypeptide is Putative solute carrier organic anion transporter family member 1B7 (SLCO1B7) (Homo sapiens (Human)).